Reading from the N-terminus, the 282-residue chain is Protoheme IX farnesyltransferase (282 aa).

A run of 9 helical transmembrane segments spans residues 9 to 29, 39 to 59, 79 to 99, 102 to 122, 139 to 159, 165 to 185, 210 to 230, 231 to 251, and 261 to 281; these read LAKP…FLLA, LPLF…GCVF, LVTG…LLIL, LVLY…GFIV, VLGG…VVNI, LALF…IAML, IMLF…VLGS, ADLF…YKSI, and VFAK…CLTM.

It belongs to the UbiA prenyltransferase family. Protoheme IX farnesyltransferase subfamily.

It localises to the cell inner membrane. It carries out the reaction heme b + (2E,6E)-farnesyl diphosphate + H2O = Fe(II)-heme o + diphosphate. It participates in porphyrin-containing compound metabolism; heme O biosynthesis; heme O from protoheme: step 1/1. Converts heme B (protoheme IX) to heme O by substitution of the vinyl group on carbon 2 of heme B porphyrin ring with a hydroxyethyl farnesyl side group. In Francisella tularensis subsp. tularensis (strain FSC 198), this protein is Protoheme IX farnesyltransferase.